Here is a 511-residue protein sequence, read N- to C-terminus: Mediator of RNA polymerase II transcription subunit 17 (511 aa).

This sequence belongs to the Mediator complex subunit 17 family. Component of the Mediator complex.

It is found in the nucleus. In terms of biological role, component of the Mediator complex, a coactivator involved in the regulated transcription of nearly all RNA polymerase II-dependent genes. Mediator functions as a bridge to convey information from gene-specific regulatory proteins to the basal RNA polymerase II transcription machinery. Mediator is recruited to promoters by direct interactions with regulatory proteins and serves as a scaffold for the assembly of a functional preinitiation complex with RNA polymerase II and the general transcription factors. The polypeptide is Mediator of RNA polymerase II transcription subunit 17 (SRB4) (Yarrowia lipolytica (strain CLIB 122 / E 150) (Yeast)).